The chain runs to 474 residues: Catalase (474 aa).

Catalysis depends on residues histidine 52 and asparagine 124. Tyrosine 334 contacts heme.

The protein belongs to the catalase family. Requires heme as cofactor.

It carries out the reaction 2 H2O2 = O2 + 2 H2O. In terms of biological role, decomposes hydrogen peroxide into water and oxygen; serves to protect cells from the toxic effects of hydrogen peroxide. This Campylobacter jejuni subsp. jejuni serotype O:2 (strain ATCC 700819 / NCTC 11168) protein is Catalase (katA).